Consider the following 127-residue polypeptide: Chorismate mutase AroH (127 aa).

The Chorismate mutase aroH-type domain occupies 3 to 121 (IRGIRGATTV…VVVLRPDLSL (119 aa)). Residues arginine 7, 74–78 (TCMQE), arginine 90, and tyrosine 108 contribute to the prephenate site.

As to quaternary structure, homotrimer.

It is found in the cytoplasm. It carries out the reaction chorismate = prephenate. It participates in metabolic intermediate biosynthesis; prephenate biosynthesis; prephenate from chorismate: step 1/1. In terms of biological role, catalyzes the Claisen rearrangement of chorismate to prephenate. Probably involved in the aromatic amino acid biosynthesis. The polypeptide is Chorismate mutase AroH (Bacillus subtilis (strain 168)).